The sequence spans 148 residues: Large ribosomal subunit protein bL28c (148 aa).

Residues 1–71 (MAASGMLISN…PLKPSLQPVA (71 aa)) constitute a chloroplast transit peptide.

Component of the chloroplast large ribosomal subunit (LSU). Mature 70S chloroplast ribosomes of higher plants consist of a small (30S) and a large (50S) subunit. The 30S small subunit contains 1 molecule of ribosomal RNA (16S rRNA) and 24 different proteins. The 50S large subunit contains 3 rRNA molecules (23S, 5S and 4.5S rRNA) and 33 different proteins.

It localises to the plastid. The protein resides in the chloroplast. In terms of biological role, component of the chloroplast ribosome (chloro-ribosome), a dedicated translation machinery responsible for the synthesis of chloroplast genome-encoded proteins, including proteins of the transcription and translation machinery and components of the photosynthetic apparatus. In Spinacia oleracea (Spinach), this protein is Large ribosomal subunit protein bL28c (RPL28).